Consider the following 54-residue polypeptide: Large ribosomal subunit protein bL33 (54 aa).

The protein belongs to the bacterial ribosomal protein bL33 family.

The sequence is that of Large ribosomal subunit protein bL33 from Chloroflexus aggregans (strain MD-66 / DSM 9485).